The following is a 114-amino-acid chain: Large ribosomal subunit protein bL19 (114 aa).

Belongs to the bacterial ribosomal protein bL19 family.

In terms of biological role, this protein is located at the 30S-50S ribosomal subunit interface and may play a role in the structure and function of the aminoacyl-tRNA binding site. The protein is Large ribosomal subunit protein bL19 of Lysinibacillus sphaericus (strain C3-41).